The following is a 429-amino-acid chain: Trigger factor (429 aa).

Positions 161-246 constitute a PPIase FKBP-type domain; that stretch reads GDRLSIDFKG…INEVALPKEP (86 aa).

It belongs to the FKBP-type PPIase family. Tig subfamily.

It localises to the cytoplasm. The catalysed reaction is [protein]-peptidylproline (omega=180) = [protein]-peptidylproline (omega=0). Its function is as follows. Involved in protein export. Acts as a chaperone by maintaining the newly synthesized protein in an open conformation. Functions as a peptidyl-prolyl cis-trans isomerase. The polypeptide is Trigger factor (Ruthia magnifica subsp. Calyptogena magnifica).